Reading from the N-terminus, the 259-residue chain is Alpha-acetolactate decarboxylase (259 aa).

Belongs to the alpha-acetolactate decarboxylase family.

It catalyses the reaction (2S)-2-acetolactate + H(+) = (R)-acetoin + CO2. It participates in polyol metabolism; (R,R)-butane-2,3-diol biosynthesis; (R,R)-butane-2,3-diol from pyruvate: step 2/3. Its function is as follows. Converts acetolactate into acetoin, which can be excreted by the cells. This may be a mechanism for controlling the internal pH of cells in the stationary stage. The polypeptide is Alpha-acetolactate decarboxylase (budA) (Raoultella terrigena (Klebsiella terrigena)).